The primary structure comprises 241 residues: Carboxy-S-adenosyl-L-methionine synthase (241 aa).

Residues Tyr38, 63–65, 88–89, 116–117, Asn131, and Arg198 each bind S-adenosyl-L-methionine; these read GCS, DN, and DI.

This sequence belongs to the class I-like SAM-binding methyltransferase superfamily. Cx-SAM synthase family. In terms of assembly, homodimer.

The catalysed reaction is prephenate + S-adenosyl-L-methionine = carboxy-S-adenosyl-L-methionine + 3-phenylpyruvate + H2O. Functionally, catalyzes the conversion of S-adenosyl-L-methionine (SAM) to carboxy-S-adenosyl-L-methionine (Cx-SAM). This is Carboxy-S-adenosyl-L-methionine synthase from Pseudoalteromonas translucida (strain TAC 125).